Consider the following 208-residue polypeptide: Large ribosomal subunit protein bL25 (208 aa).

This sequence belongs to the bacterial ribosomal protein bL25 family. CTC subfamily. In terms of assembly, part of the 50S ribosomal subunit; part of the 5S rRNA/L5/L18/L25 subcomplex. Contacts the 5S rRNA. Binds to the 5S rRNA independently of L5 and L18.

Its function is as follows. This is one of the proteins that binds to the 5S RNA in the ribosome where it forms part of the central protuberance. The protein is Large ribosomal subunit protein bL25 of Acidovorax ebreus (strain TPSY) (Diaphorobacter sp. (strain TPSY)).